A 264-amino-acid polypeptide reads, in one-letter code: uncharacterized protein (264 aa).

The chain crosses the membrane as a helical span at residues 7–27; that stretch reads LTLGICLVLLIILIVGYVIMT.

The protein belongs to the staphylococcal tandem lipoprotein family.

The protein localises to the cell membrane. This is an uncharacterized protein from Staphylococcus aureus (strain N315).